Here is a 123-residue protein sequence, read N- to C-terminus: Small ribosomal subunit protein uS12 (123 aa).

The residue at position 89 (Asp-89) is a 3-methylthioaspartic acid.

The protein belongs to the universal ribosomal protein uS12 family. Part of the 30S ribosomal subunit. Contacts proteins S8 and S17. May interact with IF1 in the 30S initiation complex.

Functionally, with S4 and S5 plays an important role in translational accuracy. Its function is as follows. Interacts with and stabilizes bases of the 16S rRNA that are involved in tRNA selection in the A site and with the mRNA backbone. Located at the interface of the 30S and 50S subunits, it traverses the body of the 30S subunit contacting proteins on the other side and probably holding the rRNA structure together. The combined cluster of proteins S8, S12 and S17 appears to hold together the shoulder and platform of the 30S subunit. In Rhodopseudomonas palustris (strain HaA2), this protein is Small ribosomal subunit protein uS12.